The chain runs to 156 residues: Small ribosomal subunit protein uS7 (156 aa).

The protein belongs to the universal ribosomal protein uS7 family. Part of the 30S ribosomal subunit. Contacts proteins S9 and S11.

Functionally, one of the primary rRNA binding proteins, it binds directly to 16S rRNA where it nucleates assembly of the head domain of the 30S subunit. Is located at the subunit interface close to the decoding center, probably blocks exit of the E-site tRNA. This Staphylococcus carnosus (strain TM300) protein is Small ribosomal subunit protein uS7.